A 1117-amino-acid polypeptide reads, in one-letter code: ATP-dependent RNA helicase mtr4 (1117 aa).

A disordered region spans residues 19–86 (KSLKEESKNS…DNQDLIPNND (68 aa)). A compositionally biased stretch (basic and acidic residues) spans 65-79 (SATKRAKIENLKDNQ). Residues 207 to 363 (IACIERQESV…WITKIHRQPC (157 aa)) enclose the Helicase ATP-binding domain. 220 to 227 (AHTSAGKT) lines the ATP pocket. A DEIH box motif is present at residues 311 to 314 (DEIH). Residues 414 to 433 (GDDPAAMATKGNAKKGKTGK) are disordered. Residues 441 to 642 (DIYKIVKMIM…LSYNMILNLL (202 aa)) form the Helicase C-terminal domain.

It belongs to the helicase family. SKI2 subfamily. Component of the TRAMP complex composed of at least cid14, mtr4, and air1.

Its subcellular location is the nucleus. Functionally, component of the TRAMP complex which has a poly(A) RNA polymerase activity and is involved in a post-transcriptional quality control mechanism limiting inappropriate expression of genetic information. Polyadenylation is required for the degradative activity of the exosome on several of its nuclear RNA substrates. Required for heterochromatic gene silencing at centromeric repeats by either exosome- or RNAi-mediated degradation of heterochromatic transcripts. The protein is ATP-dependent RNA helicase mtr4 (mtr4) of Schizosaccharomyces pombe (strain 972 / ATCC 24843) (Fission yeast).